The chain runs to 902 residues: Glutamate receptor 4 (902 aa).

An N-terminal signal peptide occupies residues 1 to 20 (MRIISRQIVLLFSGFWGLAM). Residues 22–544 (AFPSSVQIGG…GVFSFLDPLA (523 aa)) are Extracellular-facing. N-linked (GlcNAc...) asparagine glycans are attached at residues asparagine 52, asparagine 56, asparagine 258, asparagine 371, asparagine 407, and asparagine 414. Cysteines 84 and 331 form a disulfide. L-glutamate contacts are provided by proline 500, threonine 502, and arginine 507. Residues 545 to 565 (YEIWMCIVFAYIGVSVVLFLV) form a helical membrane-spanning segment. Topologically, residues 566–592 (SRFSPYEWHTEEPEDGKEGPSDQPPNE) are cytoplasmic. Residues 593–608 (FGIFNSLWFSLGAFMQ) constitute an intramembrane region (helical; Pore-forming). Residues 609–611 (QGC) lie within the membrane without spanning it. Cysteine 611 carries the S-palmitoyl cysteine lipid modification. The Cytoplasmic segment spans residues 612 to 617 (DISPRS). Residues 618–638 (LSGRIVGGVWWFFTLIIISSY) traverse the membrane as a helical segment. The Extracellular portion of the chain corresponds to 639–813 (TANLAAFLTV…DKTSALSLSN (175 aa)). L-glutamate is bound by residues serine 676, threonine 677, and glutamate 727. Cysteine 740 and cysteine 795 are oxidised to a cystine. The helical transmembrane segment at 814 to 834 (VAGVFYILVGGLGLAMLVALI) threads the bilayer. Over 835–902 (EFCYKSRAEA…GLAVIASDLP (68 aa)) the chain is Cytoplasmic. Cysteine 837 is lipidated: S-palmitoyl cysteine. Serine 862 bears the Phosphoserine; by PKC/PRKCG mark.

Belongs to the glutamate-gated ion channel (TC 1.A.10.1) family. GRIA4 subfamily. As to quaternary structure, homotetramer or heterotetramer of pore-forming glutamate receptor subunits. Tetramers may be formed by the dimerization of dimers. Interacts with EPB41L1 via its C-terminus. Isoform 3 interacts with PICK1. Found in a complex with GRIA1, GRIA2, GRIA3, CNIH2, CNIH3, CACNG2, CACNG3, CACNG4, CACNG5, CACNG7 and CACNG8. Interacts with CACNG5 and PRKCG. Found in a complex with GRIA1, GRIA2, GRIA3, DLG4, CACNG8 and CNIH2. Palmitoylated. Depalmitoylated upon L-glutamate stimulation. ZDHHC3/GODZ specifically palmitoylates Cys-611, which leads to Golgi retention and decreased cell surface expression. In contrast, Cys-837 palmitoylation does not affect cell surface expression but regulates stimulation-dependent endocytosis. Post-translationally, phosphorylated at Ser-862 by PRKCG; phosphorylation increases plasma membrane-associated GRI4 expression.

It is found in the cell membrane. It localises to the postsynaptic cell membrane. Its subcellular location is the cell projection. The protein resides in the dendrite. The enzyme catalyses Ca(2+)(in) = Ca(2+)(out). It carries out the reaction Na(+)(in) = Na(+)(out). It catalyses the reaction Mg(2+)(in) = Mg(2+)(out). In terms of biological role, ionotropic glutamate receptor that functions as a ligand-gated cation channel, gated by L-glutamate and glutamatergic agonists such as alpha-amino-3-hydroxy-5-methyl-4-isoxazolepropionic acid (AMPA), quisqualic acid, and kainic acid. L-glutamate acts as an excitatory neurotransmitter at many synapses in the central nervous system and plays an important role in fast excitatory synaptic transmission. Binding of the excitatory neurotransmitter L-glutamate induces a conformation change, leading to the opening of the cation channel, and thereby converts the chemical signal to an electrical impulse upon entry of monovalent and divalent cations such as sodium and calcium. The receptor then desensitizes rapidly and enters a transient inactive state, characterized by the presence of bound agonist. In the presence of CACNG8, shows resensitization which is characterized by a delayed accumulation of current flux upon continued application of L-glutamate. This chain is Glutamate receptor 4, found in Macaca fascicularis (Crab-eating macaque).